Consider the following 757-residue polypeptide: MNITQILSQELSATAAQITAAVELLDDGATVPFIARYRKEATGGLDDTQLRRLAERLQYLRELEERKAVVLKSIEEQGKLSDDLRAQIEAADNKTALEDLYLPYKPKRRTKAQIAREHGLQPLADVLLAEQSQDVEAAAQGYLNENVPDAKAALDGARAILMEQFAEDAELIGTLRDKLWNEAEIHAQVVGGKETEGEKFSDYFDHREPIRAMPSHRALAVLRGRNEGVLNIALKYQPDDTPITQQSEYEQIIARRFKVSDGHKWLRDTVRLTWRAKIFLSLELEALNRLKEAADTDAITVFARNLKDLLLAAPAGRLTTLGLDPGYRNGVKCAVVDDTGKLLDTVIVYLHQENNMLATLSRLIKQHGVKLIAIGNGTASRETDKIAGELVREMSKMGLHKIVVSEAGASIYSASELAAREFPDLDVSLRGAVSIARRLQDPLAELVKIDPKSIGVGQYQHDVNQSQLAKSLDAVVEDCVNAVGVDVNTASAPLLARISGLNQTLAQNIVAYRDENGAFDSRKKLLKVPRLGEKTFEQAAGFLRINGGKEPLDASAVHPEAYPVVAKMLAQQGISAAELIGNRERVKQIKASDFTDERFGLPTILDILSELEKPGRDPRGEFQTASFAEGIHEISDLQVGMILEGVVSNVANFGAFVDIGVHQDGLVHISALSNKFVQDPREVVKAGDVVKVKVLEVDAARKRIALTMRLDDEPGGAKHKMPSENRSRERTAGRKPQRNDRAPANSAMADAFAKLKR.

An S1 motif domain is found at 640–709 (GMILEGVVSN…ARKRIALTMR (70 aa)). Over residues 710-741 (LDDEPGGAKHKMPSENRSRERTAGRKPQRNDR) the composition is skewed to basic and acidic residues. A disordered region spans residues 710-757 (LDDEPGGAKHKMPSENRSRERTAGRKPQRNDRAPANSAMADAFAKLKR).

This is an uncharacterized protein from Neisseria meningitidis serogroup A / serotype 4A (strain DSM 15465 / Z2491).